Consider the following 199-residue polypeptide: Nucleoside triphosphate pyrophosphatase (199 aa).

D76 functions as the Proton acceptor in the catalytic mechanism.

It belongs to the Maf family. A divalent metal cation serves as cofactor.

It is found in the cytoplasm. The enzyme catalyses a ribonucleoside 5'-triphosphate + H2O = a ribonucleoside 5'-phosphate + diphosphate + H(+). The catalysed reaction is a 2'-deoxyribonucleoside 5'-triphosphate + H2O = a 2'-deoxyribonucleoside 5'-phosphate + diphosphate + H(+). Functionally, nucleoside triphosphate pyrophosphatase. May have a dual role in cell division arrest and in preventing the incorporation of modified nucleotides into cellular nucleic acids. The polypeptide is Nucleoside triphosphate pyrophosphatase (Ruegeria pomeroyi (strain ATCC 700808 / DSM 15171 / DSS-3) (Silicibacter pomeroyi)).